We begin with the raw amino-acid sequence, 160 residues long: Putative pre-16S rRNA nuclease (160 aa).

This sequence belongs to the YqgF nuclease family.

The protein resides in the cytoplasm. Could be a nuclease involved in processing of the 5'-end of pre-16S rRNA. The sequence is that of Putative pre-16S rRNA nuclease from Jannaschia sp. (strain CCS1).